The following is a 148-amino-acid chain: Deoxyuridine 5'-triphosphate nucleotidohydrolase (148 aa).

Substrate is bound by residues 68-70, Asn81, 85-87, and Lys95; these read RSG and TID.

This sequence belongs to the dUTPase family. It depends on Mg(2+) as a cofactor.

It carries out the reaction dUTP + H2O = dUMP + diphosphate + H(+). It participates in pyrimidine metabolism; dUMP biosynthesis; dUMP from dCTP (dUTP route): step 2/2. Functionally, this enzyme is involved in nucleotide metabolism: it produces dUMP, the immediate precursor of thymidine nucleotides and it decreases the intracellular concentration of dUTP so that uracil cannot be incorporated into DNA. The polypeptide is Deoxyuridine 5'-triphosphate nucleotidohydrolase (Rickettsia felis (strain ATCC VR-1525 / URRWXCal2) (Rickettsia azadi)).